Consider the following 607-residue polypeptide: Glycosyltransferase 25 family member (607 aa).

Residues 1-22 form the signal peptide; it reads MKPVSCVGLLVLLVGVLVTVKG. Residues Asn226, Asn254, Asn514, and Asn565 are each glycosylated (N-linked (GlcNAc...) asparagine). The interval 566-607 is disordered; the sequence is DTSDSSAEKKGDKEQLSSKTLMDSTISRDEHELSVANRKSEL. Composition is skewed to basic and acidic residues over residues 571 to 581 and 591 to 607; these read SAEKKGDKEQL and ISRD…KSEL. The short motif at 604–607 is the Prevents secretion from ER element; the sequence is KSEL.

The protein belongs to the glycosyltransferase 25 family.

The protein resides in the endoplasmic reticulum lumen. This Aedes aegypti (Yellowfever mosquito) protein is Glycosyltransferase 25 family member.